A 215-amino-acid chain; its full sequence is Transmembrane protein 267 (215 aa).

A run of 3 helical transmembrane segments spans residues 77-97 (FCEV…HFFL), 114-134 (PLHC…LMQL), and 178-198 (YWLY…IMCL).

Its subcellular location is the membrane. This Xenopus laevis (African clawed frog) protein is Transmembrane protein 267 (tmem267).